A 92-amino-acid polypeptide reads, in one-letter code: DNA-directed RNA polymerase subunit Rpo11 (92 aa).

It belongs to the archaeal Rpo11/eukaryotic RPB11/RPC19 RNA polymerase subunit family. Part of the 13-subunit RNA polymerase complex.

It localises to the cytoplasm. It carries out the reaction RNA(n) + a ribonucleoside 5'-triphosphate = RNA(n+1) + diphosphate. DNA-dependent RNA polymerase (RNAP) catalyzes the transcription of DNA into RNA using the four ribonucleoside triphosphates as substrates. The sequence is that of DNA-directed RNA polymerase subunit Rpo11 from Saccharolobus shibatae (strain ATCC 51178 / DSM 5389 / JCM 8931 / NBRC 15437 / B12) (Sulfolobus shibatae).